Reading from the N-terminus, the 572-residue chain is Proline--tRNA ligase (572 aa).

The protein belongs to the class-II aminoacyl-tRNA synthetase family. ProS type 1 subfamily. In terms of assembly, homodimer.

Its subcellular location is the cytoplasm. The catalysed reaction is tRNA(Pro) + L-proline + ATP = L-prolyl-tRNA(Pro) + AMP + diphosphate. Catalyzes the attachment of proline to tRNA(Pro) in a two-step reaction: proline is first activated by ATP to form Pro-AMP and then transferred to the acceptor end of tRNA(Pro). As ProRS can inadvertently accommodate and process non-cognate amino acids such as alanine and cysteine, to avoid such errors it has two additional distinct editing activities against alanine. One activity is designated as 'pretransfer' editing and involves the tRNA(Pro)-independent hydrolysis of activated Ala-AMP. The other activity is designated 'posttransfer' editing and involves deacylation of mischarged Ala-tRNA(Pro). The misacylated Cys-tRNA(Pro) is not edited by ProRS. In Bacillus licheniformis (strain ATCC 14580 / DSM 13 / JCM 2505 / CCUG 7422 / NBRC 12200 / NCIMB 9375 / NCTC 10341 / NRRL NRS-1264 / Gibson 46), this protein is Proline--tRNA ligase.